A 397-amino-acid polypeptide reads, in one-letter code: MKPLSWSEAFGKGAGRIQASTIRELLKLTQRPGILSFAGGLPAPELFPKEEAAEAAARILREKGEVALQYSPTEGYAPLRAFVAEWIGVRPEEVLITTGSQQALDLVGKVFLDEGSPVLLEAPSYMGAIQAFRLQGPRFLTVPAGEEGPDLDALEEVLKRERPRFLYLIPSFQNPTGGLTPLPARKRLLQMVMERGLVVVEDDAYRELYFGEARLPSLFELAREAGYPGVIYLGSFSKVLSPGLRVAFAVAHPEALQKLVQAKQGADLHTPMLNQMLVHELLKEGFSERLERVRRVYREKAQAMLHALDREVPKEVRYTRPKGGMFVWMELPKGLSAEGLFRRALEENVAFVPGGPFFANGGGENTLRLSYATLDREGIAEGVRRLGRALKGLLALV.

Gly-40 contacts substrate. Residues Tyr-70, 100-101, Asn-174, 202-205, 235-237, and Arg-245 contribute to the pyridoxal 5'-phosphate site; these read SQ, DDAY, and SFS. Position 174 (Asn-174) interacts with substrate. Lys-263 carries the post-translational modification N6-(pyridoxal phosphate)lysine. Substrate is bound at residue Arg-368.

Belongs to the class-I pyridoxal-phosphate-dependent aminotransferase family. In terms of assembly, homodimer. Pyridoxal 5'-phosphate serves as cofactor.

It catalyses the reaction L-2-aminoadipate + 2-oxoglutarate = 2-oxoadipate + L-glutamate. The protein operates within amino-acid biosynthesis; L-lysine biosynthesis via AAA pathway; L-alpha-aminoadipate from 2-oxoglutarate: step 5/5. Catalyzes the transfer of an amino group between 2-oxoadipate (2-OA) and glutamate (Glu) to yield alpha-aminodipate (AAA). It can also transaminate glutamate, leucine, and aromatic amino acids. It also contributes in the biosynthesis of other amino acids such as leucine. The protein is 2-aminoadipate transaminase (lysN) of Thermus thermophilus (strain ATCC BAA-163 / DSM 7039 / HB27).